The following is a 686-amino-acid chain: Translation initiation factor IF-2 (686 aa).

Residues 54 to 105 (KPSVADEFEVEEKVVRSKKNSNKKKKKGKGNEDKRQENFAGRQQTQTVETPD) form a disordered region. Basic residues predominate over residues 69-81 (RSKKNSNKKKKKG). Positions 188–357 (ERPAVVTIMG…LLVSEVEEYK (170 aa)) constitute a tr-type G domain. A G1 region spans residues 197 to 204 (GHVDHGKT). 197-204 (GHVDHGKT) contacts GTP. The segment at 222 to 226 (GITQH) is G2. The tract at residues 243–246 (DTPG) is G3. GTP is bound by residues 243-247 (DTPGH) and 297-300 (NKMD). Residues 297–300 (NKMD) are G4. Positions 333-335 (SAI) are G5.

Belongs to the TRAFAC class translation factor GTPase superfamily. Classic translation factor GTPase family. IF-2 subfamily.

The protein resides in the cytoplasm. Its function is as follows. One of the essential components for the initiation of protein synthesis. Protects formylmethionyl-tRNA from spontaneous hydrolysis and promotes its binding to the 30S ribosomal subunits. Also involved in the hydrolysis of GTP during the formation of the 70S ribosomal complex. This is Translation initiation factor IF-2 from Bacillus cereus (strain 03BB102).